Here is a 335-residue protein sequence, read N- to C-terminus: Holliday junction branch migration complex subunit RuvB (335 aa).

The segment at 4–184 is large ATPase domain (RuvB-L); it reads ADRLIQPTAL…FGIVQRLEFY (181 aa). ATP-binding positions include Ile-23, Arg-24, Gly-65, Lys-68, Thr-69, Thr-70, 131–133, Arg-174, Tyr-184, and Arg-221; that span reads EDY. Thr-69 lines the Mg(2+) pocket. A small ATPAse domain (RuvB-S) region spans residues 185–255; the sequence is NIKDLTQIVK…VASAALDMLD (71 aa). Residues 258 to 335 form a head domain (RuvB-H) region; sequence KEGFDYMDRK…LHFGYDYEPN (78 aa). DNA is bound by residues Arg-294, Arg-313, and Arg-318.

This sequence belongs to the RuvB family. Homohexamer. Forms an RuvA(8)-RuvB(12)-Holliday junction (HJ) complex. HJ DNA is sandwiched between 2 RuvA tetramers; dsDNA enters through RuvA and exits via RuvB. An RuvB hexamer assembles on each DNA strand where it exits the tetramer. Each RuvB hexamer is contacted by two RuvA subunits (via domain III) on 2 adjacent RuvB subunits; this complex drives branch migration. In the full resolvosome a probable DNA-RuvA(4)-RuvB(12)-RuvC(2) complex forms which resolves the HJ.

The protein localises to the cytoplasm. The enzyme catalyses ATP + H2O = ADP + phosphate + H(+). The RuvA-RuvB-RuvC complex processes Holliday junction (HJ) DNA during genetic recombination and DNA repair, while the RuvA-RuvB complex plays an important role in the rescue of blocked DNA replication forks via replication fork reversal (RFR). RuvA specifically binds to HJ cruciform DNA, conferring on it an open structure. The RuvB hexamer acts as an ATP-dependent pump, pulling dsDNA into and through the RuvAB complex. RuvB forms 2 homohexamers on either side of HJ DNA bound by 1 or 2 RuvA tetramers; 4 subunits per hexamer contact DNA at a time. Coordinated motions by a converter formed by DNA-disengaged RuvB subunits stimulates ATP hydrolysis and nucleotide exchange. Immobilization of the converter enables RuvB to convert the ATP-contained energy into a lever motion, pulling 2 nucleotides of DNA out of the RuvA tetramer per ATP hydrolyzed, thus driving DNA branch migration. The RuvB motors rotate together with the DNA substrate, which together with the progressing nucleotide cycle form the mechanistic basis for DNA recombination by continuous HJ branch migration. Branch migration allows RuvC to scan DNA until it finds its consensus sequence, where it cleaves and resolves cruciform DNA. In Pseudoalteromonas atlantica (strain T6c / ATCC BAA-1087), this protein is Holliday junction branch migration complex subunit RuvB.